Here is a 297-residue protein sequence, read N- to C-terminus: Transcription factor PCF8 (297 aa).

The interval 1-22 (MEEVVGGGKERKRPRGALVGVG) is disordered. The TCP domain occupies 46-104 (GKDRHSKVVTSRGLRDRRVRLSVPTAIAFYDIQDRLGVDQPSKAIEWLIRAAAAAIDAL). Disordered regions lie at residues 116–136 (AASS…SETS) and 273–297 (AAPA…ERKT). A compositionally biased stretch (basic and acidic residues) spans 282–297 (GERRLQLWDFKEERKT).

As to quaternary structure, forms homodimers and heterodimers.

The protein localises to the nucleus. Its function is as follows. Transcription activator. Binds the promoter core sequence 5'-GGNCC-3'. The polypeptide is Transcription factor PCF8 (PCF8) (Oryza sativa subsp. indica (Rice)).